The following is a 78-amino-acid chain: DNA-directed RNA polymerase subunit Rpo5 (78 aa).

This sequence belongs to the archaeal Rpo5/eukaryotic RPB5 RNA polymerase subunit family. As to quaternary structure, part of the RNA polymerase complex.

The protein resides in the cytoplasm. The enzyme catalyses RNA(n) + a ribonucleoside 5'-triphosphate = RNA(n+1) + diphosphate. In terms of biological role, DNA-dependent RNA polymerase (RNAP) catalyzes the transcription of DNA into RNA using the four ribonucleoside triphosphates as substrates. The protein is DNA-directed RNA polymerase subunit Rpo5 of Methanocaldococcus jannaschii (strain ATCC 43067 / DSM 2661 / JAL-1 / JCM 10045 / NBRC 100440) (Methanococcus jannaschii).